The chain runs to 236 residues: Ascorbate-specific transmembrane electron transporter 2 (236 aa).

Over 1–13 the chain is Cytoplasmic; that stretch reads MGLGLGVRAAPFT. The helical transmembrane segment at 14–34 threads the bilayer; it reads YAAHALAVAAAAMVLVWAIYF. The region spanning 15 to 219 is the Cytochrome b561 domain; sequence AAHALAVAAA…FGASVVVAAI (205 aa). Residues 35 to 50 lie on the Extracellular side of the membrane; it reads RGGLAIEATNKNLIFN. Residues 51 to 71 traverse the membrane as a helical segment; the sequence is VHPVLMLIGYIIIGGEAIMVY. His-52 is a binding site for heme b. Residue 67 to 75 coordinates L-ascorbate; the sequence is AIMVYRVLP. Residues 72-84 lie on the Cytoplasmic side of the membrane; that stretch reads RVLPTSNHETNKL. Residues 85–105 form a helical membrane-spanning segment; sequence IHLVLHGIALVLGAVGIYFAF. Residues His-86 and His-120 each contribute to the heme b site. Over 106-122 the chain is Extracellular; the sequence is KNHNESGIANLYSLHSW. A monodehydro-L-ascorbate radical-binding site is contributed by 116 to 125; it reads LYSLHSWIGI. The helical transmembrane segment at 123–143 threads the bilayer; it reads IGIGTITLYGIQWIVGFVTFF. At 144–153 the chain is on the cytoplasmic side; that stretch reads FPGAAPNVKK. Residues 154 to 174 form a helical membrane-spanning segment; sequence GVLPWHILFGLFVYILALANA. Residue His-159 coordinates heme b. Residues 175-201 lie on the Extracellular side of the membrane; it reads ELGFLEKLTFLESSGLDKYGTEAFLVN. The helical transmembrane segment at 202–222 threads the bilayer; it reads FTALVVVLFGASVVVAAIAPV. The Cytoplasmic portion of the chain corresponds to 223–236; sequence RLEEPQGYVPIPEN.

Heme b is required as a cofactor.

The protein localises to the membrane. Functionally, two-heme-containing cytochrome. Catalyzes ascorbate-dependent trans-membrane electron transfer by utilizing a concerted H(+)/e(-) transfer mechanism. This is Ascorbate-specific transmembrane electron transporter 2 from Zea mays (Maize).